The chain runs to 287 residues: U-megalopygitoxin(8)-Mo12 (287 aa).

Residues 1–17 form the signal peptide; it reads MNLQYLILSLLSTTVYG. His-284 bears the Histidine amide mark.

It belongs to the megalysin family. Contains 2 disulfide bonds. As to expression, expressed by the venom apparatus.

The protein resides in the secreted. Its subcellular location is the target cell membrane. Its function is as follows. May function as a large pore-forming protein. In Megalopyge opercularis (Southern flannel moth), this protein is U-megalopygitoxin(8)-Mo12.